Here is a 629-residue protein sequence, read N- to C-terminus: 1-deoxy-D-xylulose-5-phosphate synthase (629 aa).

Residues H72 and 113-115 (GHA) each bind thiamine diphosphate. Residue D144 participates in Mg(2+) binding. Thiamine diphosphate-binding positions include 145–146 (GA), N174, Y287, and E370. Mg(2+) is bound at residue N174.

Belongs to the transketolase family. DXPS subfamily. Homodimer. It depends on Mg(2+) as a cofactor. Requires thiamine diphosphate as cofactor.

The enzyme catalyses D-glyceraldehyde 3-phosphate + pyruvate + H(+) = 1-deoxy-D-xylulose 5-phosphate + CO2. It participates in metabolic intermediate biosynthesis; 1-deoxy-D-xylulose 5-phosphate biosynthesis; 1-deoxy-D-xylulose 5-phosphate from D-glyceraldehyde 3-phosphate and pyruvate: step 1/1. Catalyzes the acyloin condensation reaction between C atoms 2 and 3 of pyruvate and glyceraldehyde 3-phosphate to yield 1-deoxy-D-xylulose-5-phosphate (DXP). The sequence is that of 1-deoxy-D-xylulose-5-phosphate synthase from Prochlorococcus marinus (strain MIT 9215).